The primary structure comprises 617 residues: Estrogen receptor (617 aa).

The tract at residues 1–54 is disordered; that stretch reads MSEEQARAEAPAGARQRRRSELEGYSVSLASLKLSPMYPEEEQRTTGGISSTAH. The tract at residues 1–186 is modulating; sequence MSEEQARAEA…AIGLVKEIRY (186 aa). 2 NR C4-type zinc fingers span residues 187–207 and 223–247; these read CSVC…CEGC and CPAT…LRKC. Residues 187–252 constitute a DNA-binding region (nuclear receptor); it reads CSVCSDYASG…RLRKCYEVGM (66 aa). The interval 253 to 315 is hinge; that stretch reads MKGGFRKERG…GGGVADVVCM (63 aa). Residues 269–303 form a disordered region; the sequence is NRRPSGLKERERGYSKAQSGSDVREALPQDGQSSS. In terms of domain architecture, NR LBD spans 316 to 552; the sequence is SPEQVLLLLL…DLLLEMLDAH (237 aa). A disordered region spans residues 568-617; the sequence is VSSSPTTTATTPTTNTTTTTTTTTHHPSNGSTCPADLPSNPPGPGQSPSP. Positions 573-591 are enriched in low complexity; that stretch reads TTTATTPTTNTTTTTTTTT. A compositionally biased stretch (pro residues) spans 606–617; that stretch reads SNPPGPGQSPSP.

It belongs to the nuclear hormone receptor family. NR3 subfamily. As to quaternary structure, binds DNA as a homodimer. Can form a heterodimer with ER-beta. In terms of tissue distribution, ovary and testis.

It localises to the nucleus. In terms of biological role, the steroid hormones and their receptors are involved in the regulation of eukaryotic gene expression and affect cellular proliferation and differentiation in target tissues. This chain is Estrogen receptor (esr1), found in Ictalurus punctatus (Channel catfish).